The chain runs to 790 residues: Tumor necrosis factor alpha-induced protein 3 (790 aa).

An N-acetylalanine modification is found at A2. The tract at residues 58-300 is TRAF-binding; sequence PQFREIIHKA…LTDPENEMKE (243 aa). The OTU domain maps to 92–263; sequence LVALKTNGDG…SHHFVPLVTL (172 aa). The active site involves D100. The active-site Nucleophile is the C103. 3 interaction with ubiquitin regions span residues 157–159, 190–192, and 224–227; these read LCY, SLE, and FAPL. Residue H256 is the Proton acceptor of the active site. The interval 369–775 is interaction with TNIP1; it reads AQNPMESSLP…ACDHFGNAKC (407 aa). The A20-type 1 zinc-finger motif lies at 381–416; the sequence is SLMDVKCETPNCPFFMSVNTQPLCHECSERRQKNQN. Residues 386 to 453 form an interaction with RIPK1 region; it reads KCETPNCPFF…EPLAWNPEEP (68 aa). Zn(2+) is bound by residues C387, C392, C404, and C407. Residues 415–467 form a disordered region; that stretch reads QNKLPKLNSKPGPEGLPGMALGASRGEAYEPLAWNPEEPTGGPHSAPPTAPSP. Phosphoserine is present on S459. 2 consecutive A20-type zinc fingers follow at residues 472–507 and 515–548; these read ETTA…LHAS and HLDP…AEAS. Positions 478, 483, 495, 498, 521, 524, 536, and 539 each coordinate Zn(2+). The interval 550 to 580 is disordered; the sequence is SLSTSLPPSCHQRSKSDPSQLVRSPSPHSCH. Over residues 566 to 576 the composition is skewed to polar residues; that stretch reads DPSQLVRSPSP. S575 carries the post-translational modification Phosphoserine. The A20-type 4 zinc-finger motif lies at 601 to 636; it reads RTGTSKCRKAGCMYFGTPENKGFCTLCFIEYRENKH. The required for proteasomal degradation of UBE2N and UBE2D3, TRAF6 deubiquitination, and TAX1BP1 interaction with UBE2N stretch occupies residues 605-655; that stretch reads SKCRKAGCMYFGTPENKGFCTLCFIEYRENKHLVAASGKASPTASRFQNTI. Residues 606–790 are sufficient for inhibitory activity of TNF-induced NF-kappa-B activity; the sequence is KCRKAGCMYF…ECFQFKQMYG (185 aa). The Zn(2+) site is built by C607, C612, C624, and C627. Phosphoserine is present on S645. The segment at 651-686 adopts an A20-type 5 zinc-finger fold; that stretch reads FQNTIPCLGRECGTLGSTMFEGYCQKCFIEAQNQRF. 4 residues coordinate Zn(2+): C657, C662, C674, and C677. Positions 689–705 are enriched in basic and acidic residues; that stretch reads AKRTEEQLRSSQRRDVP. The segment at 689 to 712 is disordered; that stretch reads AKRTEEQLRSSQRRDVPRTTQSTS. Residues 697–790 form a required for lysosomal localization and for TRAF2 lysosomal degradation region; the sequence is RSSQRRDVPR…ECFQFKQMYG (94 aa). 2 consecutive A20-type zinc fingers follow at residues 710 to 745 and 756 to 790; these read STSR…RMGP and DPPK…QMYG. The Zn(2+) site is built by C716, C721, C733, C736, C762, C767, C779, and C782.

This sequence belongs to the peptidase C64 family. As to quaternary structure, homodimer. Interacts with TNIP1, TAX1BP1 and TRAF2. Interacts with RNF11, ITCH and TAX1BP1 only after TNF stimulation; these interaction are transient and they are lost after 1 hour of stimulation with TNF. Interacts with YWHAZ and YWHAH. Interacts with IKBKG; the interaction is induced by TNF stimulation and by polyubiquitin. Interacts with RIPK1. Interacts with UBE2N; the interaction requires TAX1BP1. Interacts with TRAF6. Proteolytically cleaved by MALT1 upon TCR stimulation; disrupts NF-kappa-B inhibitory function and results in increased IL-2 production. It is proposed that only a fraction of TNFAIP3 colocalized with TCR and CBM complex is cleaved, leaving the main TNFAIP3 pool intact.

It is found in the cytoplasm. The protein resides in the nucleus. Its subcellular location is the lysosome. The catalysed reaction is Thiol-dependent hydrolysis of ester, thioester, amide, peptide and isopeptide bonds formed by the C-terminal Gly of ubiquitin (a 76-residue protein attached to proteins as an intracellular targeting signal).. Its function is as follows. Ubiquitin-editing enzyme that contains both ubiquitin ligase and deubiquitinase activities. Involved in immune and inflammatory responses signaled by cytokines, such as TNF-alpha and IL-1 beta, or pathogens via Toll-like receptors (TLRs) through terminating NF-kappa-B activity. Essential component of a ubiquitin-editing protein complex, comprising also RNF11, ITCH and TAX1BP1, that ensures the transient nature of inflammatory signaling pathways. In cooperation with TAX1BP1 promotes disassembly of E2-E3 ubiquitin protein ligase complexes in IL-1R and TNFR-1 pathways; affected are at least E3 ligases TRAF6, TRAF2 and BIRC2, and E2 ubiquitin-conjugating enzymes UBE2N and UBE2D3. In cooperation with TAX1BP1 promotes ubiquitination of UBE2N and proteasomal degradation of UBE2N and UBE2D3. Upon TNF stimulation, deubiquitinates 'Lys-63'-polyubiquitin chains on RIPK1 and catalyzes the formation of 'Lys-48'-polyubiquitin chains. This leads to RIPK1 proteasomal degradation and consequently termination of the TNF- or LPS-mediated activation of NF-kappa-B. Deubiquitinates TRAF6 probably acting on 'Lys-63'-linked polyubiquitin. Upon T-cell receptor (TCR)-mediated T-cell activation, deubiquitinates 'Lys-63'-polyubiquitin chains on MALT1 thereby mediating disassociation of the CBM (CARD11:BCL10:MALT1) and IKK complexes and preventing sustained IKK activation. Deubiquitinates NEMO/IKBKG; the function is facilitated by TNIP1 and leads to inhibition of NF-kappa-B activation. Upon stimulation by bacterial peptidoglycans, probably deubiquitinates RIPK2. Can also inhibit I-kappa-B-kinase (IKK) through a non-catalytic mechanism which involves polyubiquitin; polyubiquitin promotes association with IKBKG and prevents IKK MAP3K7-mediated phosphorylation. Targets TRAF2 for lysosomal degradation. In vitro able to deubiquitinate 'Lys-11'-, 'Lys-48'- and 'Lys-63' polyubiquitin chains. Inhibitor of programmed cell death. Has a role in the function of the lymphoid system. Required for LPS-induced production of pro-inflammatory cytokines and IFN beta in LPS-tolerized macrophages. This is Tumor necrosis factor alpha-induced protein 3 (TNFAIP3) from Macaca fascicularis (Crab-eating macaque).